A 601-amino-acid chain; its full sequence is Proline--tRNA ligase (601 aa).

It belongs to the class-II aminoacyl-tRNA synthetase family. ProS type 1 subfamily. Homodimer.

It localises to the cytoplasm. The catalysed reaction is tRNA(Pro) + L-proline + ATP = L-prolyl-tRNA(Pro) + AMP + diphosphate. In terms of biological role, catalyzes the attachment of proline to tRNA(Pro) in a two-step reaction: proline is first activated by ATP to form Pro-AMP and then transferred to the acceptor end of tRNA(Pro). As ProRS can inadvertently accommodate and process non-cognate amino acids such as alanine and cysteine, to avoid such errors it has two additional distinct editing activities against alanine. One activity is designated as 'pretransfer' editing and involves the tRNA(Pro)-independent hydrolysis of activated Ala-AMP. The other activity is designated 'posttransfer' editing and involves deacylation of mischarged Ala-tRNA(Pro). The misacylated Cys-tRNA(Pro) is not edited by ProRS. In Trichodesmium erythraeum (strain IMS101), this protein is Proline--tRNA ligase.